A 71-amino-acid polypeptide reads, in one-letter code: Large ribosomal subunit protein bL31 (71 aa).

Cys-16, Cys-18, Cys-37, and Cys-40 together coordinate Zn(2+).

This sequence belongs to the bacterial ribosomal protein bL31 family. Type A subfamily. Part of the 50S ribosomal subunit. Zn(2+) is required as a cofactor.

Functionally, binds the 23S rRNA. This Nitratidesulfovibrio vulgaris (strain ATCC 29579 / DSM 644 / CCUG 34227 / NCIMB 8303 / VKM B-1760 / Hildenborough) (Desulfovibrio vulgaris) protein is Large ribosomal subunit protein bL31.